A 377-amino-acid chain; its full sequence is Glutamate 5-kinase (377 aa).

Lys18 serves as a coordination point for ATP. Residues Ser55, Asp142, and Asn154 each contribute to the substrate site. ATP-binding positions include 174–175 (SD) and 216–222 (TGGMKSK). The 79-residue stretch at 281–359 (QGEVVVDAGA…REIEALLGYK (79 aa)) folds into the PUA domain.

Belongs to the glutamate 5-kinase family.

The protein resides in the cytoplasm. The enzyme catalyses L-glutamate + ATP = L-glutamyl 5-phosphate + ADP. The protein operates within amino-acid biosynthesis; L-proline biosynthesis; L-glutamate 5-semialdehyde from L-glutamate: step 1/2. In terms of biological role, catalyzes the transfer of a phosphate group to glutamate to form L-glutamate 5-phosphate. The protein is Glutamate 5-kinase of Meiothermus ruber.